A 162-amino-acid polypeptide reads, in one-letter code: Small ribosomal subunit protein uS12m (162 aa).

Residues M1 to L37 constitute a mitochondrion transit peptide.

It belongs to the universal ribosomal protein uS12 family. As to quaternary structure, component of the mitochondrial small ribosomal subunit (mt-SSU). Mature yeast 74S mitochondrial ribosomes consist of a small (37S) and a large (54S) subunit. The 37S small subunit contains a 15S ribosomal RNA (15S mt-rRNA) and at least 32 different proteins. The 54S large subunit contains a 21S rRNA (21S mt-rRNA) and at least 45 different proteins. uS12m forms part of the decoding center of the mt-SSU.

It localises to the mitochondrion. Functionally, component of the mitochondrial ribosome (mitoribosome), a dedicated translation machinery responsible for the synthesis of mitochondrial genome-encoded proteins, including at least some of the essential transmembrane subunits of the mitochondrial respiratory chain. The mitoribosomes are attached to the mitochondrial inner membrane and translation products are cotranslationally integrated into the membrane. uS12m is required for respiratory growth. This Schizosaccharomyces pombe (strain 972 / ATCC 24843) (Fission yeast) protein is Small ribosomal subunit protein uS12m.